The chain runs to 89 residues: Small ribosomal subunit protein bS20 (89 aa).

The protein belongs to the bacterial ribosomal protein bS20 family.

In terms of biological role, binds directly to 16S ribosomal RNA. The polypeptide is Small ribosomal subunit protein bS20 (Stenotrophomonas maltophilia (strain R551-3)).